The primary structure comprises 705 residues: Elongation factor G (705 aa).

In terms of domain architecture, tr-type G spans 8–294 (NLYRNFGIMA…AVIDYLPSPL (287 aa)). Residues 17 to 24 (AHIDAGKT), 92 to 96 (DTPGH), and 146 to 149 (NKMD) each bind GTP.

The protein belongs to the TRAFAC class translation factor GTPase superfamily. Classic translation factor GTPase family. EF-G/EF-2 subfamily.

The protein resides in the cytoplasm. Catalyzes the GTP-dependent ribosomal translocation step during translation elongation. During this step, the ribosome changes from the pre-translocational (PRE) to the post-translocational (POST) state as the newly formed A-site-bound peptidyl-tRNA and P-site-bound deacylated tRNA move to the P and E sites, respectively. Catalyzes the coordinated movement of the two tRNA molecules, the mRNA and conformational changes in the ribosome. In Ruegeria pomeroyi (strain ATCC 700808 / DSM 15171 / DSS-3) (Silicibacter pomeroyi), this protein is Elongation factor G.